Here is a 517-residue protein sequence, read N- to C-terminus: RNA-binding region-containing protein 3 (517 aa).

The tract at residues 1–26 (MAAPEQPLAISRGCTSSSSLSPPRGD) is disordered. Positions 1-257 (MAAPEQPLAI…STDDEDRQRM (257 aa)) are necessary for interaction with PDCD7. A Phosphoserine modification is found at serine 21. An RRM 1 domain is found at 27–102 (RTLLVRHLPA…HTLVVEFAKE (76 aa)). 2 disordered regions span residues 106-130 (VHSPCPTSGSEKKKRSDDPVEDDKE) and 213-254 (MPLH…DEDR). A Phosphoserine modification is found at serine 108. Residues 115 to 130 (SEKKKRSDDPVEDDKE) are compositionally biased toward basic and acidic residues. Positions 211 to 380 (DYMPLHAPLP…LDITEEIKED (170 aa)) are necessary for binding to m(7)G-capped U12 snRNA. Residues 217–230 (APLPPTSPQPPEEP) are compositionally biased toward pro residues. Residues 231–252 (PLPDEDEELSSEESEYESTDDE) are compositionally biased toward acidic residues. The RRM 2 domain occupies 420 to 503 (CRIYVKNLAK…KPMVVQFARS (84 aa)).

Component of the U11/U12 snRNPs that are part of the U12-type spliceosome. Found in a complex with m(7)G-capped U12 snRNA. Interacts with PDCD7. In terms of tissue distribution, highly expressed in pancreas and kidney. Detected at lower levels in heart, brain, placenta, lung, liver, spleen, thymus, prostate, testis, ovary, small intestine, colon and leukocytes.

It is found in the nucleus. In terms of biological role, participates in pre-mRNA U12-dependent splicing, performed by the minor spliceosome which removes U12-type introns. U12-type introns comprises less than 1% of all non-coding sequences. Binds to the 3'-stem-loop of m(7)G-capped U12 snRNA. This is RNA-binding region-containing protein 3 (RNPC3) from Homo sapiens (Human).